The primary structure comprises 146 residues: Fluoride-specific ion channel FluC (146 aa).

The next 4 membrane-spanning stretches (helical) occupy residues 8-28, 47-67, 91-111, and 121-141; these read FAIA…TLTV, LANL…QALV, IGVL…AVFA, and MLLG…AAVV. Na(+)-binding residues include Gly95 and Thr98.

Belongs to the fluoride channel Fluc/FEX (TC 1.A.43) family.

The protein localises to the cell inner membrane. The catalysed reaction is fluoride(in) = fluoride(out). With respect to regulation, na(+) is not transported, but it plays an essential structural role and its presence is essential for fluoride channel function. Its function is as follows. Fluoride-specific ion channel. Important for reducing fluoride concentration in the cell, thus reducing its toxicity. This chain is Fluoride-specific ion channel FluC, found in Rhodopirellula baltica (strain DSM 10527 / NCIMB 13988 / SH1).